The following is a 336-amino-acid chain: DNA-directed RNA polymerase subunit alpha (336 aa).

The alpha N-terminal domain (alpha-NTD) stretch occupies residues M1–D232. The tract at residues F248–Y336 is alpha C-terminal domain (alpha-CTD).

This sequence belongs to the RNA polymerase alpha chain family. Homodimer. The RNAP catalytic core consists of 2 alpha, 1 beta, 1 beta' and 1 omega subunit. When a sigma factor is associated with the core the holoenzyme is formed, which can initiate transcription.

The enzyme catalyses RNA(n) + a ribonucleoside 5'-triphosphate = RNA(n+1) + diphosphate. DNA-dependent RNA polymerase catalyzes the transcription of DNA into RNA using the four ribonucleoside triphosphates as substrates. The protein is DNA-directed RNA polymerase subunit alpha of Rhizobium rhizogenes (strain K84 / ATCC BAA-868) (Agrobacterium radiobacter).